The sequence spans 230 residues: Uracil phosphoribosyltransferase (230 aa).

Lys38 to Lys42 contacts GTP. Residues Arg87, Arg112, and Asp140–Thr148 contribute to the 5-phospho-alpha-D-ribose 1-diphosphate site. Residues Ile204 and Gly209–Ala211 contribute to the uracil site. Asp210 provides a ligand contact to 5-phospho-alpha-D-ribose 1-diphosphate.

It belongs to the UPRTase family. Mg(2+) serves as cofactor.

The enzyme catalyses UMP + diphosphate = 5-phospho-alpha-D-ribose 1-diphosphate + uracil. It functions in the pathway pyrimidine metabolism; UMP biosynthesis via salvage pathway; UMP from uracil: step 1/1. With respect to regulation, allosterically activated by GTP. In terms of biological role, catalyzes the conversion of uracil and 5-phospho-alpha-D-ribose 1-diphosphate (PRPP) to UMP and diphosphate. The protein is Uracil phosphoribosyltransferase of Thermococcus kodakarensis (strain ATCC BAA-918 / JCM 12380 / KOD1) (Pyrococcus kodakaraensis (strain KOD1)).